The following is a 1030-amino-acid chain: Germ cell nuclear acidic protein (1030 aa).

Disordered stretches follow at residues 1-59, 196-245, 266-361, 375-433, 457-594, and 699-764; these read MADH…TEDT, EWNG…TQLA, KRLA…VSSI, TMES…EQFL, LKRS…DLTY, and KLGI…PVAS. The span at 20–33 shows a compositional bias: basic and acidic residues; sequence APKDHPEKRNDQKT. 2 stretches are compositionally biased toward polar residues: residues 298-316 and 329-349; these read EPNT…TIHN and ETSS…STSG. Residues 505-516 show a composition bias toward polar residues; sequence LRTNQTPLNSTR. 2 stretches are compositionally biased toward basic and acidic residues: residues 541-553 and 578-594; these read NHID…KLID and DSDK…DLTY. Low complexity predominate over residues 720–748; sequence TPKTAPPKGTAPPKTSAPPKVSTPPKSTK.

Belongs to the serine-aspartate repeat-containing protein (SDr) family.

The protein localises to the cytoplasm. Its subcellular location is the chromosome. Functionally, may play a role in DNA-protein cross-links (DPCs) clearance, ensuring the genomic stability by protecting germ cells and early embryos from various sources of damage. Limits replication stress and DNA double-strand breaks. This is Germ cell nuclear acidic protein from Drosophila melanogaster (Fruit fly).